Here is a 499-residue protein sequence, read N- to C-terminus: Probable folate-biopterin transporter 2 (499 aa).

12 helical membrane passes run 43 to 63 (WSFV…GGSL), 92 to 112 (IPWI…IFGF), 116 to 136 (PYFI…SLHS), 141 to 161 (YLAL…DVTI), 185 to 205 (LSSS…VHLV), 209 to 229 (GVFG…IVFS), 266 to 286 (LYMY…FYWF), 302 to 322 (FILS…QLVL), 330 to 350 (LCLW…ILVF), 354 to 374 (LKFG…SQMI), 399 to 419 (FALL…LGGI), and 435 to 455 (WLAV…LFLV).

Belongs to the major facilitator superfamily. Folate-biopterin transporter (TC 2.A.71) family.

The protein localises to the membrane. Functionally, could mediate folate transport. In Arabidopsis thaliana (Mouse-ear cress), this protein is Probable folate-biopterin transporter 2.